Consider the following 174-residue polypeptide: Dehydratase AgnL8 (174 aa).

Positions 24, 44, and 47 each coordinate substrate. Catalysis depends on residues His79 and His104.

This sequence belongs to the scytalone dehydratase family. Homotrimer. Each subunit contains an active site, located in the central part of the hydrophobic core of the monomer, which functions independently.

It participates in secondary metabolite biosynthesis. Dehydratase; part of the gene cluster that mediates the biosynthesis of agnestins, dihydroxy-xanthone metabolites. The pathway begins with the assembly and cyclization of atrochrysone thioester by the non-reducing polyketide synthase Agnpks1. The atrochrysone carboxyl ACP thioesterase AgnL7 then breaks the thioester bond and releases the atrochrysone carboxylic acid as the first enzyme-free intermediate. The decarboxylase AgnL1 then catalyzes the concerted decarboxylation-elimination required to convert atochrysone carboxylic acid into emodin anthrone, which is further oxidized to emodin by the anthrone oxygenase AgnL2. Emodin then undergoes reduction catalyzed by the oxidoreductase AgnL4 to yield the dihydroquinone tautomer which is the substrate for reduction by the short chain dehydrogenase AgnL6 reduction to produce hydroxyketone, followed by AgnL8 dehydration and likely spontaneous autoxidation to chrysophanol. Baeyer-Villiger oxidation by the oxidase AgnL3 leads to monodictyphenone via cleavage of the C-10/C-10a bond of chrysophanol. Alternative cleavage at the C-4a/C-10 bond of chrysophanol also leads to the formation some cephalone F. Further conversion to agnestins A and B, requires reduction to dihydro-monodictyphenone, oxidation to agnestin C probably via an epoxide, and rearrangement to either agnestin A or agnestin B directly, although agnestin A or agnestin B can also interconvert. Within the cluster, AgnR1 is the only unassigned oxidoreductase present which could be involved in this conversion. However, AgnR1 seems not to be involved in this step, and thus genes involved in the proposed oxidation/reduction may be located elsewhere on the genome. Further agnestin A derivatives are probably formed by spontaneous decarboxylations, dehydrations and methanolysis reactions. This Paecilomyces divaricatus (Penicillium divaricatum) protein is Dehydratase AgnL8.